We begin with the raw amino-acid sequence, 101 residues long: Small ribosomal subunit protein uS14 (101 aa).

Belongs to the universal ribosomal protein uS14 family. In terms of assembly, part of the 30S ribosomal subunit. Contacts proteins S3 and S10.

Functionally, binds 16S rRNA, required for the assembly of 30S particles and may also be responsible for determining the conformation of the 16S rRNA at the A site. The sequence is that of Small ribosomal subunit protein uS14 from Alkalilimnicola ehrlichii (strain ATCC BAA-1101 / DSM 17681 / MLHE-1).